Here is a 430-residue protein sequence, read N- to C-terminus: Histidine--tRNA ligase (430 aa).

The protein belongs to the class-II aminoacyl-tRNA synthetase family. Homodimer.

The protein localises to the cytoplasm. It catalyses the reaction tRNA(His) + L-histidine + ATP = L-histidyl-tRNA(His) + AMP + diphosphate + H(+). The protein is Histidine--tRNA ligase of Chlamydia felis (strain Fe/C-56) (Chlamydophila felis).